A 372-amino-acid polypeptide reads, in one-letter code: Beta-1,3-N-acetylglucosaminyltransferase radical fringe (372 aa).

Residues 1-10 (MNSSCLGLRR) are Cytoplasmic-facing. The helical; Signal-anchor for type II membrane protein transmembrane segment at 11-27 (TCFLLSVTAAAVLLLLL) threads the bilayer. The Lumenal segment spans residues 28 to 372 (PRGQPPAAPR…TIWCPNKKMS (345 aa)). Residues 30–48 (GQPPAAPRRRPPPAGPSRP) show a composition bias toward pro residues. A disordered region spans residues 30–96 (GQPPAAPRRR…RVRMGPPGGS (67 aa)). The segment covering 64-78 (DRGGGSGAAGGGRGV) has biased composition (gly residues). R120 lines the substrate pocket. The N-linked (GlcNAc...) asparagine glycan is linked to N159. Intrachain disulfides connect C160–C171 and C189–C253. D193 is a substrate binding site. D194 lines the Mn(2+) pocket. The active site involves D283. Mn(2+) is bound at residue H307. A disulfide bridge links C357 with C366.

Belongs to the glycosyltransferase 31 family. It depends on Mn(2+) as a cofactor.

Its subcellular location is the golgi apparatus membrane. It carries out the reaction 3-O-(alpha-L-fucosyl)-L-threonyl-[EGF-like domain protein] + UDP-N-acetyl-alpha-D-glucosamine = 3-O-(N-acetyl-beta-D-glucosaminyl-(1-&gt;3)-alpha-L-fucosyl)-L-threonyl-[EGF-like domain protein] + UDP + H(+). It catalyses the reaction 3-O-(alpha-L-fucosyl)-L-seryl-[EGF-like domain protein] + UDP-N-acetyl-alpha-D-glucosamine = 3-O-(N-acetyl-beta-D-glucosaminyl-(1-&gt;3)-alpha-L-fucosyl)-L-seryl-[EGF-like domain protein] + UDP + H(+). In terms of biological role, glycosyltransferase that initiates the elongation of O-linked fucose residues attached to EGF-like repeats in the extracellular domain of Notch molecules. Plays an important role in limb outgrowth, it directs the formation and positioning of the apical ectodermal ridge (AER), one of the key organizer centers of vertebrate limb development. This Gallus gallus (Chicken) protein is Beta-1,3-N-acetylglucosaminyltransferase radical fringe (RFNG).